Reading from the N-terminus, the 615-residue chain is DNA mismatch repair protein MutL (615 aa).

A disordered region spans residues 363–397 (FAEPAAREPVAPRYTPAPASGSRPAAPWPNAQPGY). The span at 364–391 (AEPAAREPVAPRYTPAPASGSRPAAPWP) shows a compositional bias: low complexity.

This sequence belongs to the DNA mismatch repair MutL/HexB family.

Functionally, this protein is involved in the repair of mismatches in DNA. It is required for dam-dependent methyl-directed DNA mismatch repair. May act as a 'molecular matchmaker', a protein that promotes the formation of a stable complex between two or more DNA-binding proteins in an ATP-dependent manner without itself being part of a final effector complex. This Escherichia coli (strain ATCC 8739 / DSM 1576 / NBRC 3972 / NCIMB 8545 / WDCM 00012 / Crooks) protein is DNA mismatch repair protein MutL.